The primary structure comprises 144 residues: D-aminoacyl-tRNA deacylase (144 aa).

The Gly-cisPro motif, important for rejection of L-amino acids motif lies at 136-137; the sequence is GP.

It belongs to the DTD family. Homodimer.

It is found in the cytoplasm. It carries out the reaction glycyl-tRNA(Ala) + H2O = tRNA(Ala) + glycine + H(+). It catalyses the reaction a D-aminoacyl-tRNA + H2O = a tRNA + a D-alpha-amino acid + H(+). Its function is as follows. An aminoacyl-tRNA editing enzyme that deacylates mischarged D-aminoacyl-tRNAs. Also deacylates mischarged glycyl-tRNA(Ala), protecting cells against glycine mischarging by AlaRS. Acts via tRNA-based rather than protein-based catalysis; rejects L-amino acids rather than detecting D-amino acids in the active site. By recycling D-aminoacyl-tRNA to D-amino acids and free tRNA molecules, this enzyme counteracts the toxicity associated with the formation of D-aminoacyl-tRNA entities in vivo and helps enforce protein L-homochirality. The chain is D-aminoacyl-tRNA deacylase from Histophilus somni (strain 129Pt) (Haemophilus somnus).